Here is a 499-residue protein sequence, read N- to C-terminus: Probable cytosol aminopeptidase (499 aa).

2 residues coordinate Mn(2+): Lys-262 and Asp-267. Lys-274 is a catalytic residue. The Mn(2+) site is built by Asp-285, Asp-344, and Glu-346. The active site involves Arg-348.

Belongs to the peptidase M17 family. Mn(2+) serves as cofactor.

The protein resides in the cytoplasm. The catalysed reaction is Release of an N-terminal amino acid, Xaa-|-Yaa-, in which Xaa is preferably Leu, but may be other amino acids including Pro although not Arg or Lys, and Yaa may be Pro. Amino acid amides and methyl esters are also readily hydrolyzed, but rates on arylamides are exceedingly low.. It carries out the reaction Release of an N-terminal amino acid, preferentially leucine, but not glutamic or aspartic acids.. Its function is as follows. Presumably involved in the processing and regular turnover of intracellular proteins. Catalyzes the removal of unsubstituted N-terminal amino acids from various peptides. The sequence is that of Probable cytosol aminopeptidase from Protochlamydia amoebophila (strain UWE25).